Consider the following 329-residue polypeptide: Biotin synthase (329 aa).

The region spanning 46-275 (FFGRRLKLVR…LNPKAELRAS (230 aa)) is the Radical SAM core domain. The [4Fe-4S] cluster site is built by Cys64, Cys68, and Cys71. The [2Fe-2S] cluster site is built by Cys108, Cys140, Cys200, and Arg273.

This sequence belongs to the radical SAM superfamily. Biotin synthase family. In terms of assembly, homodimer. [4Fe-4S] cluster serves as cofactor. [2Fe-2S] cluster is required as a cofactor.

It carries out the reaction (4R,5S)-dethiobiotin + (sulfur carrier)-SH + 2 reduced [2Fe-2S]-[ferredoxin] + 2 S-adenosyl-L-methionine = (sulfur carrier)-H + biotin + 2 5'-deoxyadenosine + 2 L-methionine + 2 oxidized [2Fe-2S]-[ferredoxin]. It functions in the pathway cofactor biosynthesis; biotin biosynthesis; biotin from 7,8-diaminononanoate: step 2/2. Functionally, catalyzes the conversion of dethiobiotin (DTB) to biotin by the insertion of a sulfur atom into dethiobiotin via a radical-based mechanism. In Thermus thermophilus (strain ATCC BAA-163 / DSM 7039 / HB27), this protein is Biotin synthase.